The chain runs to 186 residues: Elongation factor P (186 aa).

It belongs to the elongation factor P family.

The protein resides in the cytoplasm. The protein operates within protein biosynthesis; polypeptide chain elongation. Functionally, involved in peptide bond synthesis. Stimulates efficient translation and peptide-bond synthesis on native or reconstituted 70S ribosomes in vitro. Probably functions indirectly by altering the affinity of the ribosome for aminoacyl-tRNA, thus increasing their reactivity as acceptors for peptidyl transferase. In Prochlorococcus marinus (strain MIT 9313), this protein is Elongation factor P.